A 257-amino-acid chain; its full sequence is HTH-type transcriptional activator mta (257 aa).

One can recognise an HTH merR-type domain in the interval 2–71; it reads KYQVKQVAEI…LDEIKEMLDH (70 aa). Positions 5 to 24 form a DNA-binding region, H-T-H motif; sequence VKQVAEISGVSIRTLHHYDN. A hinge region spans residues 71 to 74; the sequence is HPNF. Positions 76-104 are essential for dimerization; it reads RKAALQSQKEILMKKKQRMDEMIQTIDRT. Residues 76 to 107 are a coiled coil; it reads RKAALQSQKEILMKKKQRMDEMIQTIDRTLLS.

Homodimer.

Its subcellular location is the cytoplasm. Its function is as follows. Global transcriptional regulator that activates transcription of bmr and blt by binding directly to their promoter. Also stimulates the expression of the mta gene itself, ydfK and ymfE. The protein is HTH-type transcriptional activator mta (mta) of Bacillus subtilis (strain 168).